A 463-amino-acid chain; its full sequence is NADH dehydrogenase [ubiquinone] iron-sulfur protein 2, mitochondrial (463 aa).

The N-terminal 33 residues, 1-33, are a transit peptide targeting the mitochondrion; the sequence is MAALRALCGFRGVAAQVLRPGAGVRLPIQPSRG. Lys62 carries the post-translational modification N6-acetyllysine. Arg118 is subject to Symmetric dimethylarginine. Residues Cys326, Cys332, and Cys347 each coordinate [4Fe-4S] cluster.

This sequence belongs to the complex I 49 kDa subunit family. Core subunit of respiratory chain NADH dehydrogenase (Complex I) which is composed of 45 different subunits. Component of the iron-sulfur (IP) fragment of the enzyme. Interacts with NDUFAF3. Interacts with NDUFAF7. Interacts with CERS2. [4Fe-4S] cluster serves as cofactor. In terms of processing, dimethylation at Arg-118 by NDUFAF7 takes place after NDUFS2 assembles into the complex I, leading to stabilize the early intermediate complex.

The protein resides in the mitochondrion inner membrane. The enzyme catalyses a ubiquinone + NADH + 5 H(+)(in) = a ubiquinol + NAD(+) + 4 H(+)(out). Its function is as follows. Core subunit of the mitochondrial membrane respiratory chain NADH dehydrogenase (Complex I) which catalyzes electron transfer from NADH through the respiratory chain, using ubiquinone as an electron acceptor. Essential for the catalytic activity of complex I. Essential for the assembly of complex I. Redox-sensitive, critical component of the oxygen-sensing pathway in the pulmonary vasculature which plays a key role in acute pulmonary oxygen-sensing and hypoxic pulmonary vasoconstriction. Plays an important role in carotid body sensing of hypoxia. Essential for glia-like neural stem and progenitor cell proliferation, differentiation and subsequent oligodendrocyte or neuronal maturation. In Homo sapiens (Human), this protein is NADH dehydrogenase [ubiquinone] iron-sulfur protein 2, mitochondrial (NDUFS2).